The sequence spans 665 residues: Protein LOW PHOTOSYNTHETIC EFFICIENCY 1, chloroplastic (665 aa).

Residues 1 to 68 constitute a chloroplast transit peptide; that stretch reads MQALSILPLK…VSSNRKVLFL (68 aa). 13 PPR repeats span residues 145–179, 181–217, 218–252, 253–283, 309–344, 345–375, 380–414, 422–456, 457–491, 492–526, 527–561, 562–596, and 597–631; these read PLQV…KSES, GVIG…GIVP, NIVT…GFEP, NPIT…LREK, GRIC…GVRP, SREE…IRER, SLSV…GPEP, VVSH…GLKP, QRRH…GEKP, TVIS…GIEP, NLYA…GIEP, SVVT…NVEP, and NEIT…GLKL.

It belongs to the PPR family. P subfamily. As to quaternary structure, interacts with HCF173.

It is found in the plastid. Its subcellular location is the chloroplast thylakoid membrane. It localises to the chloroplast stroma. Its function is as follows. Required for light-regulated photosystem II (PSII) biogenesis and grana thylakoids formation by binding to the 5' UTR of PSII subunit mRNAs (e.g. psbJ, psbN and psbA) in a light-dependent manner through a redox-based mechanism, and facilitating the association of HCF173 with target mRNAs, which encodes PSII reaction center proteins (e.g. J, N and D1), thus regulating its expression by modulating ribosome loading. This Arabidopsis thaliana (Mouse-ear cress) protein is Protein LOW PHOTOSYNTHETIC EFFICIENCY 1, chloroplastic.